The following is an 88-amino-acid chain: Arminin 7965 (88 aa).

A signal peptide spans 1–18 (MKTVFAILFLTFIAFTYA). The propeptide occupies 19-57 (KSYEDVKEEIKNEVEREIFEDLEEESDVLDSNVRELNDA). Residue alanine 85 is modified to Alanine amide.

Belongs to the arminin family. Expressed in entodermal epithelium along the body column.

The protein resides in the secreted. The protein localises to the target cell membrane. Its function is as follows. Antimicrobial peptide with a broad-spectrum antimicrobial activity. Keeps its antibacterial activity under a wide range of salt concentrations that mimic physiological conditions of human blood, which is surprising, since Hydra is an obligate freshwater animal with nearly no salt tolerance. Does not affect red blood cells. This chain is Arminin 7965, found in Hydra vulgaris (Hydra).